An 871-amino-acid chain; its full sequence is Coatomer subunit gamma-2 (871 aa).

A compositionally biased stretch (basic and acidic residues) spans 1–11; that stretch reads MIKKFDKKDEE. A disordered region spans residues 1–20; the sequence is MIKKFDKKDEESGSGSNPFR. HEAT repeat units lie at residues 64–101, 283–320, 321–355, 356–392, 395–430, and 467–504; these read TEAT…ISED, RELA…KHPS, AVTA…GSES, SVDR…KYPR, SVMM…ENPE, and PVPS…QNEN. Residue Thr594 is modified to Phosphothreonine.

The protein belongs to the COPG family. In terms of assembly, oligomeric complex. Binds to CDC42. Interacts with JAGN1. Interacts with TMED10 (via cytoplasmic domain).

The protein localises to the cytoplasm. Its subcellular location is the cytosol. The protein resides in the golgi apparatus membrane. It is found in the cytoplasmic vesicle. It localises to the COPI-coated vesicle membrane. The coatomer is a cytosolic protein complex that binds to dilysine motifs and reversibly associates with Golgi non-clathrin-coated vesicles, which further mediate biosynthetic protein transport from the ER, via the Golgi up to the trans Golgi network. Coatomer complex is required for budding from Golgi membranes, and is essential for the retrograde Golgi-to-ER transport of dilysine-tagged proteins. In mammals, the coatomer can only be recruited by membranes associated to ADP-ribosylation factors (ARFs), which are small GTP-binding proteins; the complex also influences the Golgi structural integrity, as well as the processing, activity, and endocytic recycling of LDL receptors. The protein is Coatomer subunit gamma-2 (COPG2) of Bos taurus (Bovine).